Reading from the N-terminus, the 719-residue chain is Polyribonucleotide nucleotidyltransferase (719 aa).

2 residues coordinate Mg(2+): Asp495 and Asp501. The KH domain occupies 562–621 (PRRLSFRIDPELIGTVIGPGGRTIKGITERTNTKIDIEDTGIVTVASHDGAAAEEAQKII). One can recognise an S1 motif domain in the interval 631-699 (GEYFDGKVTR…NRGRINLTLR (69 aa)). The segment at 699–719 (RGVPQDGSDPQPTVILPIGES) is disordered.

It belongs to the polyribonucleotide nucleotidyltransferase family. Mg(2+) serves as cofactor.

Its subcellular location is the cytoplasm. It catalyses the reaction RNA(n+1) + phosphate = RNA(n) + a ribonucleoside 5'-diphosphate. Involved in mRNA degradation. Catalyzes the phosphorolysis of single-stranded polyribonucleotides processively in the 3'- to 5'-direction. This is Polyribonucleotide nucleotidyltransferase from Synechococcus sp. (strain RCC307).